We begin with the raw amino-acid sequence, 901 residues long: HTH-type transcriptional regulator MalT (901 aa).

39 to 46 serves as a coordination point for ATP; sequence SPAGYGKT. The HTH luxR-type domain maps to 829–894; that stretch reads ELIRTSPLTQ…DAVQHAQQLL (66 aa). Residues 853-872 constitute a DNA-binding region (H-T-H motif); that stretch reads NEQIAGELAVAATTIKTHIR.

The protein belongs to the MalT family. In terms of assembly, monomer in solution. Oligomerizes to an active state in the presence of the positive effectors ATP and maltotriose.

Activated by ATP and maltotriose, which are both required for DNA binding. In terms of biological role, positively regulates the transcription of the maltose regulon whose gene products are responsible for uptake and catabolism of malto-oligosaccharides. Specifically binds to the promoter region of its target genes, recognizing a short DNA motif called the MalT box. This chain is HTH-type transcriptional regulator MalT, found in Salmonella choleraesuis (strain SC-B67).